We begin with the raw amino-acid sequence, 290 residues long: Large ribosomal subunit protein uL2m (290 aa).

It belongs to the universal ribosomal protein uL2 family. Probably part of the large ribosomal subunit.

It is found in the hydrogenosome. The sequence is that of Large ribosomal subunit protein uL2m (rpl2) from Nyctotherus ovalis.